The chain runs to 167 residues: MGIEQKAGDMGIVTASLEQLVNWSRSSAMWPLLFGLACCAIEMMGAQGANYDLSRFGMEINRASPRQADLMIVAGRVSRKMAPVVRRLYDQMADPKWVIAMGDCAACGGVFNNYAIVQGVDEIVPVDVYVAGCPPRPEALIDGIIHLHEKVKRMRLDGELREPVRLS.

C38, C39, C104, and C133 together coordinate [4Fe-4S] cluster.

It belongs to the complex I 20 kDa subunit family. In terms of assembly, NDH-1 is composed of 14 different subunits. Subunits NuoB, C, D, E, F, and G constitute the peripheral sector of the complex. [4Fe-4S] cluster serves as cofactor.

It is found in the cell membrane. The catalysed reaction is a quinone + NADH + 5 H(+)(in) = a quinol + NAD(+) + 4 H(+)(out). In terms of biological role, NDH-1 shuttles electrons from NADH, via FMN and iron-sulfur (Fe-S) centers, to quinones in the respiratory chain. The immediate electron acceptor for the enzyme in this species is believed to be ubiquinone. Couples the redox reaction to proton translocation (for every two electrons transferred, four hydrogen ions are translocated across the cytoplasmic membrane), and thus conserves the redox energy in a proton gradient. In Roseiflexus sp. (strain RS-1), this protein is NADH-quinone oxidoreductase subunit B 2.